A 347-amino-acid polypeptide reads, in one-letter code: 4-hydroxy-2-oxovalerate aldolase 2 (347 aa).

Residues 7 to 259 form the Pyruvate carboxyltransferase domain; the sequence is VRITDTSLRD…KTGIDFFDIA (253 aa). Residue 15–16 coordinates substrate; the sequence is RD. Mn(2+) is bound at residue Asp-16. Catalysis depends on His-19, which acts as the Proton acceptor. Substrate is bound by residues Ser-169 and His-198. His-198 and His-200 together coordinate Mn(2+). Residue Tyr-289 coordinates substrate.

It belongs to the 4-hydroxy-2-oxovalerate aldolase family.

The enzyme catalyses (S)-4-hydroxy-2-oxopentanoate = acetaldehyde + pyruvate. The protein is 4-hydroxy-2-oxovalerate aldolase 2 of Mycobacterium ulcerans (strain Agy99).